We begin with the raw amino-acid sequence, 74 residues long: ATP synthase subunit c (74 aa).

The next 2 membrane-spanning stretches (helical) occupy residues 9-29 (IGAG…GNIF) and 54-74 (FALT…ILFV).

Belongs to the ATPase C chain family. F-type ATPases have 2 components, F(1) - the catalytic core - and F(0) - the membrane proton channel. F(1) has five subunits: alpha(3), beta(3), gamma(1), delta(1), epsilon(1). F(0) has three main subunits: a(1), b(2) and c(10-14). The alpha and beta chains form an alternating ring which encloses part of the gamma chain. F(1) is attached to F(0) by a central stalk formed by the gamma and epsilon chains, while a peripheral stalk is formed by the delta and b chains.

The protein resides in the cell inner membrane. Its function is as follows. F(1)F(0) ATP synthase produces ATP from ADP in the presence of a proton or sodium gradient. F-type ATPases consist of two structural domains, F(1) containing the extramembraneous catalytic core and F(0) containing the membrane proton channel, linked together by a central stalk and a peripheral stalk. During catalysis, ATP synthesis in the catalytic domain of F(1) is coupled via a rotary mechanism of the central stalk subunits to proton translocation. Functionally, key component of the F(0) channel; it plays a direct role in translocation across the membrane. A homomeric c-ring of between 10-14 subunits forms the central stalk rotor element with the F(1) delta and epsilon subunits. This Gluconacetobacter diazotrophicus (strain ATCC 49037 / DSM 5601 / CCUG 37298 / CIP 103539 / LMG 7603 / PAl5) protein is ATP synthase subunit c.